The chain runs to 201 residues: Iron-sulfur flavoprotein AF_1896 (201 aa).

[4Fe-4S] cluster is bound by residues Cys-46, Cys-49, Cys-52, and Cys-57.

The protein belongs to the SsuE family. Isf subfamily. Homodimer. FMN serves as cofactor. Requires [4Fe-4S] cluster as cofactor.

In terms of biological role, redox-active protein probably involved in electron transport. In Archaeoglobus fulgidus (strain ATCC 49558 / DSM 4304 / JCM 9628 / NBRC 100126 / VC-16), this protein is Iron-sulfur flavoprotein AF_1896.